The chain runs to 130 residues: Fluoride-specific ion channel FluC (130 aa).

The next 4 helical transmembrane spans lie at Phe-3–Gly-23, Gly-39–Val-59, Phe-67–Leu-87, and Val-102–Leu-122. The Na(+) site is built by Gly-77 and Thr-80.

The protein belongs to the fluoride channel Fluc/FEX (TC 1.A.43) family.

The protein localises to the cell inner membrane. It carries out the reaction fluoride(in) = fluoride(out). Na(+) is not transported, but it plays an essential structural role and its presence is essential for fluoride channel function. In terms of biological role, fluoride-specific ion channel. Important for reducing fluoride concentration in the cell, thus reducing its toxicity. This is Fluoride-specific ion channel FluC from Helicobacter pylori (strain ATCC 700392 / 26695) (Campylobacter pylori).